The following is a 397-amino-acid chain: Serpin B10 (397 aa).

A Nuclear localization signal motif is present at residues 74-77 (KKRK).

The protein belongs to the serpin family. Ov-serpin subfamily.

The protein localises to the nucleus. It is found in the cytoplasm. Its function is as follows. Protease inhibitor that may play a role in the regulation of protease activities during hematopoiesis and apoptosis induced by TNF. May regulate protease activities in the cytoplasm and in the nucleus. This Bos taurus (Bovine) protein is Serpin B10 (SERPINB10).